A 204-amino-acid polypeptide reads, in one-letter code: uncharacterized protein (204 aa).

Possibly involved in pGI2 replication mechanism. This is an uncharacterized protein from Bacillus thuringiensis.